Consider the following 250-residue polypeptide: Triosephosphate isomerase (250 aa).

9–11 (NWK) is a substrate binding site. Histidine 94 serves as the catalytic Electrophile. Glutamate 166 serves as the catalytic Proton acceptor. Residues glycine 172, serine 212, and 233 to 234 (GG) contribute to the substrate site.

This sequence belongs to the triosephosphate isomerase family. As to quaternary structure, homodimer.

It localises to the cytoplasm. The enzyme catalyses D-glyceraldehyde 3-phosphate = dihydroxyacetone phosphate. It functions in the pathway carbohydrate biosynthesis; gluconeogenesis. Its pathway is carbohydrate degradation; glycolysis; D-glyceraldehyde 3-phosphate from glycerone phosphate: step 1/1. Its function is as follows. Involved in the gluconeogenesis. Catalyzes stereospecifically the conversion of dihydroxyacetone phosphate (DHAP) to D-glyceraldehyde-3-phosphate (G3P). In Thermus thermophilus (strain ATCC 27634 / DSM 579 / HB8), this protein is Triosephosphate isomerase.